A 230-amino-acid chain; its full sequence is Potassium/proton antiporter CemA (230 aa).

The next 4 membrane-spanning stretches (helical) occupy residues leucine 7 to phenylalanine 27, isoleucine 106 to leucine 126, leucine 145 to histidine 165, and phenylalanine 181 to leucine 201.

This sequence belongs to the CemA family.

It is found in the plastid. The protein localises to the chloroplast inner membrane. The enzyme catalyses K(+)(in) + H(+)(out) = K(+)(out) + H(+)(in). In terms of biological role, contributes to K(+)/H(+) antiport activity by supporting proton efflux to control proton extrusion and homeostasis in chloroplasts in a light-dependent manner to modulate photosynthesis. Prevents excessive induction of non-photochemical quenching (NPQ) under continuous-light conditions. Indirectly promotes efficient inorganic carbon uptake into chloroplasts. The chain is Potassium/proton antiporter CemA from Hordeum vulgare (Barley).